Consider the following 172-residue polypeptide: Protein-export protein SecB (172 aa).

The protein belongs to the SecB family. Homotetramer, a dimer of dimers. One homotetramer interacts with 1 SecA dimer.

It localises to the cytoplasm. Functionally, one of the proteins required for the normal export of preproteins out of the cell cytoplasm. It is a molecular chaperone that binds to a subset of precursor proteins, maintaining them in a translocation-competent state. It also specifically binds to its receptor SecA. The polypeptide is Protein-export protein SecB (Cupriavidus pinatubonensis (strain JMP 134 / LMG 1197) (Cupriavidus necator (strain JMP 134))).